The sequence spans 281 residues: tRNA uridine(34) hydroxylase (281 aa).

The 94-residue stretch at 121–214 (SQPDVLVIDT…YLEKTHNKSG (94 aa)) folds into the Rhodanese domain. The Cysteine persulfide intermediate role is filled by cysteine 174.

The protein belongs to the TrhO family.

The catalysed reaction is uridine(34) in tRNA + AH2 + O2 = 5-hydroxyuridine(34) in tRNA + A + H2O. In terms of biological role, catalyzes oxygen-dependent 5-hydroxyuridine (ho5U) modification at position 34 in tRNAs. This chain is tRNA uridine(34) hydroxylase, found in Wolbachia pipientis subsp. Culex pipiens (strain wPip).